A 602-amino-acid polypeptide reads, in one-letter code: Lysine--tRNA ligase, chloroplastic/mitochondrial (602 aa).

Low complexity predominate over residues 50–62 (SSSSSSATTAETS). A disordered region spans residues 50–83 (SSSSSSATTAETSKPSGRNRRSASSSNSTSDREA). Residues 136–214 (VSIAGRVVAR…SICVNSFSIL (79 aa)) constitute a DNA-binding region (OB). Substrate-binding residues include glycine 285 and glutamate 309. ATP contacts are provided by residues 331–333 (RNE) and 339–340 (HN). Glutamate 347 and tyrosine 349 together coordinate substrate. Ca(2+)-binding residues include glutamate 492 and glutamate 499. An ATP-binding site is contributed by 499 to 500 (EM). Substrate is bound by residues asparagine 502 and glutamate 506. Basic and acidic residues predominate over residues 524-543 (HNAKRAEAVRESPEPNAKKD). Residues 524 to 550 (HNAKRAEAVRESPEPNAKKDDDDDESY) are disordered. Residue 575–578 (GIDR) participates in ATP binding.

This sequence belongs to the class-II aminoacyl-tRNA synthetase family. The cofactor is Ca(2+).

Its subcellular location is the plastid. It localises to the chloroplast. The protein localises to the mitochondrion. It catalyses the reaction tRNA(Lys) + L-lysine + ATP = L-lysyl-tRNA(Lys) + AMP + diphosphate. Catalyzes the specific attachment of an amino acid to its cognate tRNA in a 2 step reaction: the amino acid (AA) is first activated by ATP to form AA-AMP and then transferred to the acceptor end of the tRNA. In Arabidopsis thaliana (Mouse-ear cress), this protein is Lysine--tRNA ligase, chloroplastic/mitochondrial.